The sequence spans 642 residues: Terminase, large subunit (642 aa).

The interval 1–48 (MISDAQKAANAAGAIATGLLSLIIPVPLTTVQWANKHYYLPKESSYTP) is interaction with the terminase small subunit. The Q motif motif lies at 42–51 (KESSYTPGRW). A Walker A motif motif is present at residues 76-83 (KSARVGYT). Residues 166–353 (NYREKSVDVV…LDALKDPNGL (188 aa)) are DNA packaging/ATPase. The Walker B motif signature appears at 174–179 (VVCYDE). E179 acts as the For ATPase activity in catalysis. D401 contacts Mg(2+). Residues 401 to 587 (DSQRNRFEMY…LWDNKKRRNE (187 aa)) are endonuclease. 491-498 (GASVYGKP) provides a ligand contact to ATP. Residues 574–585 (KMRLLWDNKKRR) form a basic region. The tract at residues 589–617 (LDCLVYAYAALRVSVQRWQLDLAVLAKSR) is leucine zipper. Residues 611–642 (AVLAKSREEETTRPTLKELAAKLSGGVNGYSR) are prohead binding.

Belongs to the lambdavirus large terminase family. Heterotrimer of two small and one large terminase subunits. The catalytically competent terminase is composed of a tetramer of heterotrimers. The tetramer forms a ring structure large enough to encircle duplex DNA. Host IHFA/IHFB induces bending of viral DNA to facilitate the assembly of the terminase tetramer of heterotrimers. Interacts (via N-terminus) with the terminase small subunit (via C-terminus). Interacts (via C-terminus) with the portal protein; this interaction allows the packaging of viral DNA. Mg(2+) is required as a cofactor.

The protein localises to the host cytoplasm. It catalyses the reaction Endonucleolytic cleavage of DNA to give specific double-stranded fragments with terminal 5'-phosphates.. The terminase large subunit acts as an ATP driven molecular motor necessary for viral DNA translocation into empty capsids and as an endonuclease that cuts the viral genome from the concetamer to initiate and to end the packaging reaction. The terminase lies at a unique vertex of the procapsid and is composed of two subunits, a small terminase subunit involved in viral DNA recognition (binding to packaging sequence cos), and a large terminase subunit possessing endonucleolytic and ATPase activities (DNA maturation and packaging). The terminase binds cooperatively with the host factor IHFA/IHFB to the cos site at the junction of adjacent viral genomes. The endonuclease activity cleaves the viral DNA generating 5'overhangs of 12 bp in length. The strand separation activity separates the cohesive ends generating the single-stranded 'sticky' ends of the mature genome. IHFA/IHFB is also necessary for the strand separation activity of the terminase. The terminase remains bound to the left end of the genome to be packaged, forming a stable DNA-terminase complex. In a reaction facilitated by the viral assembly catalyst gpFI, the DNA-terminase complex binds to the portal of the procapsid thereby activating the translocase activity of the terminase. The terminase packages the viral DNA into the procapsid until the next cos site on the concatemer reaches the complex. The downstream cos site is then cut generating the mature right end of the genome, the heterotrimer undocks from the DNA-filled head and remains bound to the left end of concatemer's next genome. The chain is Terminase, large subunit (2) from Escherichia coli (Bacteriophage 21).